The following is a 414-amino-acid chain: 11-beta-hydroxysteroid dehydrogenase type 2 (414 aa).

4 helical membrane passes run 3–23 (DFAV…GGAV), 26–46 (FLAF…ATLL), 52–72 (ALCM…WLYF), and 341–361 (YYAG…PLSI). Residues 382–414 (KQQGLSPNDNNNSIKENMNDSSSNNSNFTKCID) are disordered. The segment covering 384 to 397 (QGLSPNDNNNSIKE) has biased composition (polar residues).

It belongs to the short-chain dehydrogenases/reductases (SDR) family. In terms of tissue distribution, broadly expressed in peripheral (brain, gill, eye, heart, liver, head kidney, posterior kidney, and gut).

Its subcellular location is the membrane. The catalysed reaction is an 11beta-hydroxysteroid + NAD(+) = an 11-oxosteroid + NADH + H(+). It carries out the reaction cortisol + NAD(+) = cortisone + NADH + H(+). The enzyme catalyses corticosterone + NAD(+) = 11-dehydrocorticosterone + NADH + H(+). It catalyses the reaction 11beta,17beta-dihydroxyandrost-4-ene-3-one + NAD(+) = 17beta-hydroxyandrost-4-ene-3,11-dione + NADH + H(+). The catalysed reaction is 11beta-hydroxyandrost-4-ene-3,17-dione + NAD(+) = androst-4-ene-3,11,17-trione + NADH + H(+). It functions in the pathway steroid metabolism. Functionally, catalyzes the conversion of biologically active 11beta-hydroxyglucocorticoids (11beta-hydroxysteroid) such as cortisol, to inactive 11-ketoglucocorticoids (11-oxosteroid) such as cortisone, in the presence of NAD(+). Cortisol is the primary glucocorticoid in teleosts and is released to increase glucose bioavailability in order to meet the increased energy demands in response to stress. Functions as a dehydrogenase (oxidase), thereby decreasing the concentration of active glucocorticoids, regulating the hypothalamus-pituitary-interrenal (HPI) axis function in adult fish. Decreasing the excess glucocorticoids may be of relevance to brain function and neural proliferation. Plays a key role by catalyzing the oxidation of 11beta-hydroxytestosterone (11beta,17beta-dihydroxyandrost-4-ene-3-one) to 11-ketotestosterone (17beta-hydroxyandrost-4-ene-3,11-dione), the major fish androgen, that activates androgen receptor transcriptional activity. Catalyzes the conversion of 11beta-hydroxyandrostenedione (11beta-hydroxyandrost-4-ene-3,17-dione) to 11-ketoandrostenedione (androst-4-ene-3,11,17-trione), which can be further metabolized to 11-ketotestosterone. Exerts a dual role in fish by inactivating glucocorticoids and activating androgens. This is 11-beta-hydroxysteroid dehydrogenase type 2 (hsd11b2) from Danio rerio (Zebrafish).